The sequence spans 140 residues: uncharacterized protein (140 aa).

This is an uncharacterized protein from Escherichia coli (strain K12).